We begin with the raw amino-acid sequence, 98 residues long: NADH-ubiquinone oxidoreductase chain 4L (98 aa).

3 helical membrane passes run 1–21 (MSPVYFSFSSAFILGLMGLAF), 26–46 (LLSALLCLEGMMLSLFIAIAL), and 61–81 (MILLTFSACEASAGLALLVAA).

Belongs to the complex I subunit 4L family.

The protein resides in the mitochondrion membrane. It catalyses the reaction a ubiquinone + NADH + 5 H(+)(in) = a ubiquinol + NAD(+) + 4 H(+)(out). Its function is as follows. Core subunit of the mitochondrial membrane respiratory chain NADH dehydrogenase (Complex I) which catalyzes electron transfer from NADH through the respiratory chain, using ubiquinone as an electron acceptor. Part of the enzyme membrane arm which is embedded in the lipid bilayer and involved in proton translocation. This Squalus acanthias (Spiny dogfish) protein is NADH-ubiquinone oxidoreductase chain 4L (MT-ND4L).